Reading from the N-terminus, the 460-residue chain is 3'3'-cGAMP-specific phosphodiesterase 3 (460 aa).

In terms of domain architecture, HD spans 28-189; it reads PPEHCIRCCW…IPLFSRIALL (162 aa). One can recognise an HD-GYP domain in the interval 260–455; the sequence is DDAYLECIVT…LPDEYTQLPH (196 aa). Residues His317 and Asp318 each contribute to the a divalent metal cation site. Lys321 functions as the Proton donor in the catalytic mechanism. The a divalent metal cation site is built by His346, His370, His371, and Asp399.

As to quaternary structure, monomer. Mn(2+) is required as a cofactor.

The enzyme catalyses 3',3'-cGAMP + H2O = 5'-pApG-3' + H(+). Phosphodiesterase (PDE) that catalyzes the hydrolysis of 3'3'-cyclic GMP-AMP (3'3'-cGAMP), leading to linear 5'-pApG. Counteracts the function of the 3'3'-cGAMP synthase DncV, and is involved in the modulation of intracellular 3'3'-cGAMP levels. Enhances bacterial chemotaxis and inhibits intestinal colonization in vivo. Thus exerts a crucial role in regulating bacterial infectivity through catalyzing 3'3'-cGAMP degradation. Is specific for 3'3'-cGAMP since it cannot degrade other cGAMP linkage isomers (3'2'-, 2'3'-, and 2'2'-cGAMPs); is also able to hydrolyze c-di-GMP but not c-di-AMP. The sequence is that of 3'3'-cGAMP-specific phosphodiesterase 3 from Vibrio cholerae serotype O1 (strain ATCC 39315 / El Tor Inaba N16961).